A 165-amino-acid polypeptide reads, in one-letter code: Ribonuclease H2 subunit C (165 aa).

M1 carries the post-translational modification N-acetylmethionine.

It belongs to the RNase H2 subunit C family. As to quaternary structure, the RNase H2 complex is a heterotrimer composed of the catalytic subunit RNASEH2A and the non-catalytic subunits RNASEH2B and RNASEH2C.

It is found in the nucleus. Non catalytic subunit of RNase H2, an endonuclease that specifically degrades the RNA of RNA:DNA hybrids. Participates in DNA replication, possibly by mediating the removal of lagging-strand Okazaki fragment RNA primers during DNA replication. Mediates the excision of single ribonucleotides from DNA:RNA duplexes. The chain is Ribonuclease H2 subunit C (RNASEH2C) from Bos taurus (Bovine).